Here is a 1453-residue protein sequence, read N- to C-terminus: NK-tumor recognition protein (1453 aa).

Residues 10–175 (HFDIEINREP…ADVRVIDCGV (166 aa)) form the PPIase cyclophilin-type domain. Residues 187–625 (KKRKKPTCSE…RWKPGQKPWK (439 aa)) are disordered. The span at 195 to 213 (SEGSDSSSRSSSSSESSSE) shows a compositional bias: low complexity. Residues 221-240 (IRRRRHKRRPKVRHAKKRRK) are compositionally biased toward basic residues. A compositionally biased stretch (basic and acidic residues) spans 259-286 (YSERSDVNEKRSVDSNTKREKPVVRPEE). Residue Lys323 forms a Glycyl lysine isopeptide (Lys-Gly) (interchain with G-Cter in SUMO2) linkage. A compositionally biased stretch (basic residues) spans 329–348 (SGRKIKGRGTIRYHTPPRSR). Residues Ser379, Ser401, and Ser416 each carry the phosphoserine modification. A compositionally biased stretch (basic and acidic residues) spans 382-402 (KWSKGDKLSDPCSSRWDERSL). Positions 403–421 (SQRSRSWSYNGYYSDLSTA) are enriched in polar residues. Residues 425–460 (DGHHKKHRKEKKFKHKKKAKKQKHCRRHRQTKKRRI) are compositionally biased toward basic residues. Over residues 514–531 (SSRDSYRSKSHSRSDSRG) the composition is skewed to basic and acidic residues. Composition is skewed to low complexity over residues 532–546 (SSRS…SRSL) and 554–565 (SSRSGPRRTSIS). Residues Lys576 and Lys579 each participate in a glycyl lysine isopeptide (Lys-Gly) (interchain with G-Cter in SUMO2) cross-link. Phosphoserine is present on Ser611. Residue Lys637 forms a Glycyl lysine isopeptide (Lys-Gly) (interchain with G-Cter in SUMO2) linkage. Residue Ser646 is modified to Phosphoserine. The segment covering 651-661 (TNIKATVSSSS) has biased composition (polar residues). The segment at 651–1453 (TNIKATVSSS…RSPSESSRYS (803 aa)) is disordered. Glycyl lysine isopeptide (Lys-Gly) (interchain with G-Cter in SUMO2) cross-links involve residues Lys654 and Lys664. Low complexity-rich tracts occupy residues 682-726 (RSSG…SSRS) and 736-749 (SQHS…SVSS). The span at 755 to 772 (AMFRSNRKKSVTSHKRHR) shows a compositional bias: basic residues. The span at 773–789 (SNSEKTLHSKYVRGREK) shows a compositional bias: basic and acidic residues. Residues 799–809 (SRSSLDYSSDS) are compositionally biased toward low complexity. Composition is skewed to basic and acidic residues over residues 820 to 852 (PEKE…ECPR) and 859 to 868 (KDHSRDDSVS). Phosphoserine occurs at positions 880, 882, 884, and 900. Residues 887 to 902 (DVTKSRKSDPRRGSEK) are compositionally biased toward basic and acidic residues. Residues 903-913 (EEGEASSDSES) are compositionally biased toward acidic residues. Residues 948–958 (SSASESESSCS) are compositionally biased toward low complexity. The segment covering 966 to 982 (EPQKQKHSKDDLKGDHT) has biased composition (basic and acidic residues). A compositionally biased stretch (basic residues) spans 983–1005 (KRAREKSKAKKDKKHKAPKRKQA). Residues 1030 to 1045 (DPKEKRHVSEKCEAVK) show a composition bias toward basic and acidic residues. Ser1139 and Ser1148 each carry phosphoserine. A compositionally biased stretch (polar residues) spans 1170–1180 (QESSMSESKTL). Residues 1189–1199 (SSTSVTSPVET) are compositionally biased toward low complexity. Phosphoserine is present on Ser1195. Residues Lys1208 and Lys1249 each participate in a glycyl lysine isopeptide (Lys-Gly) (interchain with G-Cter in SUMO2) cross-link. An arg/Ser tandem repeat-rich region spans residues 1303 to 1453 (RSPHRSRSKS…RSPSESSRYS (151 aa)). Over residues 1322-1346 (SVSYSHSRSRSRSSTSSYRSRSYSR) the composition is skewed to low complexity. A compositionally biased stretch (basic residues) spans 1369–1379 (HSHRTSSRSRS). The span at 1380 to 1401 (RSSSYDLHSRSRSYTYDSYYSR) shows a compositional bias: low complexity. Residues 1416–1426 (RGRSYNRRSRS) are compositionally biased toward basic residues.

It is found in the cell membrane. It catalyses the reaction [protein]-peptidylproline (omega=180) = [protein]-peptidylproline (omega=0). Inhibited by cyclosporin A (CsA). PPIase that catalyzes the cis-trans isomerization of proline imidic peptide bonds in oligopeptides and may therefore assist protein folding. Component of a putative tumor-recognition complex involved in the function of NK cells. The chain is NK-tumor recognition protein from Mus musculus (Mouse).